We begin with the raw amino-acid sequence, 355 residues long: Transcription factor TGAL9 (355 aa).

Disordered stretches follow at residues 83–104 (FPSQPMHAGEPSPKGSSSMAAI) and 118–188 (GSSK…DAKT). The span at 118-134 (GSSKRPPAAAAAGGQPS) shows a compositional bias: low complexity. The span at 135-144 (RLNNPADQPS) shows a compositional bias: polar residues. Composition is skewed to basic and acidic residues over residues 148 to 159 (KDGKAAVVKKEG) and 176 to 188 (SEHEGPKTPDAKT). One can recognise a bZIP domain in the interval 185–230 (DAKTLRRLAQNREAARKSRLRKKAYIQNLETSRIRLSQLEQELVQR). The basic motif stretch occupies residues 187–207 (KTLRRLAQNREAARKSRLRKK). The tract at residues 213–227 (LETSRIRLSQLEQEL) is leucine-zipper. The DOG1 domain occupies 254 to 355 (AAWFDGEYAR…RPSELIKVST (102 aa)).

It belongs to the bZIP family. Interacts with NPR5/NH4, NH5.1 and NH5.2.

The protein resides in the nucleus. Transcriptional regulator involved in defense response. The protein is Transcription factor TGAL9 of Oryza sativa subsp. japonica (Rice).